A 267-amino-acid chain; its full sequence is Cytochrome b (267 aa).

A run of 4 helical transmembrane segments spans residues 4–24 (FGSL…LLAA), 48–69 (WLIR…YLHI), 84–104 (WNTG…GYVL), and 149–169 (FFTL…IHLT). 2 residues coordinate heme b: His-54 and His-68. 2 residues coordinate heme b: His-153 and His-167. A ubiquinone is bound at residue His-172. Helical transmembrane passes span 197 to 217 (LKDI…ALFA) and 259 to 267 (LGGVLALAA).

This sequence belongs to the cytochrome b family. As to quaternary structure, the cytochrome bc1 complex contains 11 subunits: 3 respiratory subunits (MT-CYB, CYC1 and UQCRFS1), 2 core proteins (UQCRC1 and UQCRC2) and 6 low-molecular weight proteins (UQCRH/QCR6, UQCRB/QCR7, UQCRQ/QCR8, UQCR10/QCR9, UQCR11/QCR10 and a cleavage product of UQCRFS1). This cytochrome bc1 complex then forms a dimer. Heme b serves as cofactor.

It is found in the mitochondrion inner membrane. Functionally, component of the ubiquinol-cytochrome c reductase complex (complex III or cytochrome b-c1 complex) that is part of the mitochondrial respiratory chain. The b-c1 complex mediates electron transfer from ubiquinol to cytochrome c. Contributes to the generation of a proton gradient across the mitochondrial membrane that is then used for ATP synthesis. In Raphus cucullatus (Dodo), this protein is Cytochrome b (MT-CYB).